Reading from the N-terminus, the 283-residue chain is NADPH-dependent 7-cyano-7-deazaguanine reductase (283 aa).

89–91 (IES) lines the substrate pocket. Residue 91–92 (SK) participates in NADPH binding. Residue cysteine 190 is the Thioimide intermediate of the active site. Aspartate 197 serves as the catalytic Proton donor. A substrate-binding site is contributed by 229 to 230 (HE). 258 to 259 (RG) contacts NADPH.

This sequence belongs to the GTP cyclohydrolase I family. QueF type 2 subfamily. Homodimer.

The protein resides in the cytoplasm. It catalyses the reaction 7-aminomethyl-7-carbaguanine + 2 NADP(+) = 7-cyano-7-deazaguanine + 2 NADPH + 3 H(+). The protein operates within tRNA modification; tRNA-queuosine biosynthesis. Catalyzes the NADPH-dependent reduction of 7-cyano-7-deazaguanine (preQ0) to 7-aminomethyl-7-deazaguanine (preQ1). The sequence is that of NADPH-dependent 7-cyano-7-deazaguanine reductase from Aromatoleum aromaticum (strain DSM 19018 / LMG 30748 / EbN1) (Azoarcus sp. (strain EbN1)).